A 166-amino-acid chain; its full sequence is Deglycase PH1704 (166 aa).

In terms of domain architecture, PfpI endopeptidase spans 1-166 (MKVLFLTANE…WMREFVKLLK (166 aa)). Cys-100 (nucleophile) is an active-site residue. His-101 is a catalytic residue.

The protein belongs to the peptidase C56 family. As to quaternary structure, homohexamer formed by a dimer of trimers that assemble into a hollow ring structure.

It localises to the cytoplasm. It catalyses the reaction N(omega)-(1-hydroxy-2-oxopropyl)-L-arginyl-[protein] + H2O = lactate + L-arginyl-[protein] + H(+). The enzyme catalyses N(6)-(1-hydroxy-2-oxopropyl)-L-lysyl-[protein] + H2O = lactate + L-lysyl-[protein] + H(+). It carries out the reaction S-(1-hydroxy-2-oxopropyl)-L-cysteinyl-[protein] + H2O = lactate + L-cysteinyl-[protein] + H(+). The catalysed reaction is N(omega)-(1-hydroxy-2-oxoethyl)-L-arginyl-[protein] + H2O = L-arginyl-[protein] + glycolate + H(+). It catalyses the reaction N(6)-(1-hydroxy-2-oxoethyl)-L-lysyl-[protein] + H2O = glycolate + L-lysyl-[protein] + H(+). The enzyme catalyses S-(1-hydroxy-2-oxoethyl)-L-cysteinyl-[protein] + H2O = glycolate + L-cysteinyl-[protein] + H(+). In terms of biological role, deglycase that catalyzes the deglycation of the Maillard adducts formed between amino groups of proteins and reactive carbonyl groups of glyoxals. Thus, functions as a protein deglycase that repairs methylglyoxal- and glyoxal-glycated proteins, and releases repaired proteins and lactate or glycolate, respectively. Deglycates cysteine, arginine and lysine residues in proteins, and thus reactivates these proteins by reversing glycation by glyoxals. Acts on early glycation intermediates (hemithioacetals and aminocarbinols), preventing the formation of advanced glycation endproducts (AGE) that cause irreversible damage. Also displays proteolytic activity. The polypeptide is Deglycase PH1704 (Pyrococcus horikoshii (strain ATCC 700860 / DSM 12428 / JCM 9974 / NBRC 100139 / OT-3)).